The primary structure comprises 344 residues: FCS-Like Zinc finger 10 (344 aa).

The FLZ-type zinc-finger motif lies at 270–314; sequence DFLSFCYGCSKKLGMGEDIYMYSGYKAFCSSECRSKEIDLDEEME. The span at 309-320 shows a compositional bias: acidic residues; the sequence is LDEEMEDGDEEE. Positions 309-344 are disordered; it reads LDEEMEDGDEEEAIKSVSSSDKESKKKSNGVFFTVG.

It belongs to the FLZ family. As to quaternary structure, interacts with KIN10 and KIN11 via its FLZ-type zinc finger domain. Interacts with KINB1, KINB2 and KINB3 via its N-terminal part. Forms homodimer and heterodimer with FLZ2 and FLZ12 in vitro. Early expressed in hypocotyl and cotyledon and preferentially in the stelar region of the shoot and root. Later expressed in root-shoot junction, lateral root, old or senescing leaves and in pistil and pollen of flower buds or open flowers.

The protein localises to the cytoplasm. Its subcellular location is the nucleus. The protein resides in the endoplasmic reticulum. Its function is as follows. May act as an adapter to facilitate the interaction of SnRK1 complex with effector proteins, conferring tissue- and stimulus-type specific differences in the SnRK1 regulation pathway. Negatively regulates KIN10 leading to a repression of the SnRK1 signaling pathway. This is FCS-Like Zinc finger 10 from Arabidopsis thaliana (Mouse-ear cress).